The following is a 508-amino-acid chain: Ell-associated factor Eaf (508 aa).

Polar residues-rich tracts occupy residues 140 to 150 (GQGQLHSQGAN) and 161 to 190 (GHSTGTAPKMENSTMRISTKTKVSTGSRRN). Disordered regions lie at residues 140–226 (GQGQ…WDAN) and 251–508 (HNSG…DDDE). Ser-200 carries the phosphoserine modification. The span at 251–268 (HNSGHANTSGSSTGSATG) shows a compositional bias: low complexity. Composition is skewed to polar residues over residues 272–281 (FGSTSSSSHM) and 296–313 (QQMQQRLSPPMAQQQQPS). Positions 314–341 (NYGRGYNGGHNHVQQQQQRNSPQQQRPP) are enriched in low complexity. Over residues 391–406 (DSSDSDSGSDSDDSTE) the composition is skewed to acidic residues. 3 stretches are compositionally biased toward low complexity: residues 412–444 (QGQQQDHQQQQQQQVYQNHNHQQQQIAQQHLNQ), 461–477 (HQHQQQMAPHQQQQKQQ), and 489–502 (NDLLQNDLQLSSNS).

This sequence belongs to the EAF family.

Its subcellular location is the nucleus. In terms of biological role, promotes transcriptional elongation by Su(Tpl)/ELL. Essential for development. The sequence is that of Ell-associated factor Eaf from Drosophila erecta (Fruit fly).